The primary structure comprises 456 residues: Protein ESC2 (456 aa).

Residues 1-24 show a composition bias toward polar residues; it reads MTGDSRSISEPSINLDPDNTSFSD. The disordered stretch occupies residues 1–154; the sequence is MTGDSRSISE…SSIRSISPAG (154 aa). Acidic residues predominate over residues 25–43; it reads ENSDDFFMDNSYDIDEIDH. Positions 83 to 93 are enriched in polar residues; sequence QSLSRSSSKNV. Serine 90, serine 125, and serine 126 each carry phosphoserine. One copy of the SUMO-like region 1 repeat lies at 169 to 287; it reads ENDDFFKELA…QDFENEVSDI (119 aa). Residues 301–360 adopt a coiled-coil conformation; it reads EATLESKLKEEEAALLIKERQEMERKLEKKRNEQEESEYREFESELKNVEETQEIKENDT. Residues 380–456 form an SUMO-like region 2 repeat; the sequence is MEEVMRIALM…DEDMVDVIID (77 aa).

In terms of assembly, component of a cullin-RING ligase (CRL)-like complex composed of at least the cullin RTT101, a linker protein MMS1, and the potential substrate receptor ESC2. Interacts with RTT101 and MMS1. Interacts with SIR2.

The protein localises to the cytoplasm. It localises to the nucleus. In terms of biological role, may be a substrate targeting component of a cullin-RING-based E3 ubiquitin-protein ligase complex RTT101(MMS1-ESC2). Involved in HMR and telomere silencing via the recruitment or stabilizing of the SIR (silent information regulators) complex. The polypeptide is Protein ESC2 (ESC2) (Saccharomyces cerevisiae (strain ATCC 204508 / S288c) (Baker's yeast)).